The following is a 247-amino-acid chain: DNA repair protein RecO (247 aa).

Belongs to the RecO family.

Its function is as follows. Involved in DNA repair and RecF pathway recombination. This chain is DNA repair protein RecO, found in Alkalilimnicola ehrlichii (strain ATCC BAA-1101 / DSM 17681 / MLHE-1).